Consider the following 344-residue polypeptide: MSNAITMGIFWHLIGAASAACFYAPFKQVKQWSWETMWSVGGIVSWLILPWTISALLLPDFWAYYGQFNLSTLLPVFLFGAMWGIGNINYGLTMRYLGMSMGIGIAIGITLIVGTLMTPIINGNFDVLIHTEGGHMTLLGVFVALIGVGIVTRAGQLKERKMGIKAEEFNLKKGLLLAVMCGIFSAGMSFAMNAAKPMHEAAAALGVDPLYVALPSYVVIMGGGALVNLGFCFIRLAKVQNLSIKADFSLARPLIISNILLSALGGLMWYLQFFFYAWGHARIPAQYDYMSWMLHMSFYVLCGGLVGLVLKEWKNAGRRPVAVLSLGCVVIIIAANIVGLGMAS.

10 helical membrane-spanning segments follow: residues 4–24, 38–58, 68–88, 101–121, 131–151, 175–195, 214–234, 259–279, 290–310, and 321–341; these read AITM…CFYA, WSVG…ALLL, FNLS…IGNI, MGIG…TPII, TEGG…VGIV, LLLA…MNAA, LPSY…FCFI, ILLS…YAWG, MSWM…GLVL, and VAVL…VGLG.

The protein belongs to the L-rhamnose transporter (TC 2.A.7.6) family.

The protein resides in the cell inner membrane. It catalyses the reaction L-rhamnopyranose(in) + H(+)(in) = L-rhamnopyranose(out) + H(+)(out). Functionally, uptake of L-rhamnose across the cytoplasmic membrane with the concomitant transport of protons into the cell (symport system). This Salmonella typhi protein is L-rhamnose-proton symporter.